The following is a 350-amino-acid chain: Alcohol dehydrogenase (350 aa).

Cys-46 is a Zn(2+) binding site. Positions 47, 48, and 51 each coordinate NAD(+). Residues His-69, Cys-100, Cys-103, Cys-106, Cys-114, and Cys-156 each coordinate Zn(2+). NAD(+) is bound by residues Gly-183, Gly-184, Leu-185, and Asp-204. Thr-205 carries the post-translational modification Phosphothreonine. NAD(+) is bound by residues Lys-209 and Phe-224. The residue at position 250 (Thr-250) is a Phosphothreonine. Residues Val-271, Met-273, Ser-296, Val-298, and Arg-343 each coordinate NAD(+).

It belongs to the zinc-containing alcohol dehydrogenase family. As to quaternary structure, homotetramer. It depends on Zn(2+) as a cofactor.

The protein resides in the cytoplasm. The catalysed reaction is a primary alcohol + NAD(+) = an aldehyde + NADH + H(+). The enzyme catalyses a secondary alcohol + NAD(+) = a ketone + NADH + H(+). It catalyses the reaction ethanol + NAD(+) = acetaldehyde + NADH + H(+). Reduces acetaldehyde to ethanol during the fermentation of glucose. The protein is Alcohol dehydrogenase (adh1) of Schizosaccharomyces pombe (strain 972 / ATCC 24843) (Fission yeast).